Reading from the N-terminus, the 159-residue chain is 2-C-methyl-D-erythritol 2,4-cyclodiphosphate synthase (159 aa).

A divalent metal cation-binding residues include aspartate 10 and histidine 12. 4-CDP-2-C-methyl-D-erythritol 2-phosphate is bound by residues 10 to 12 (DVH) and 36 to 37 (HS). Histidine 44 is a binding site for a divalent metal cation. Residues 58-60 (DIG), 63-67 (FPDTD), 102-108 (AQAPKMA), 134-137 (TTTE), phenylalanine 141, and arginine 144 each bind 4-CDP-2-C-methyl-D-erythritol 2-phosphate.

Belongs to the IspF family. Homotrimer. A divalent metal cation serves as cofactor.

The catalysed reaction is 4-CDP-2-C-methyl-D-erythritol 2-phosphate = 2-C-methyl-D-erythritol 2,4-cyclic diphosphate + CMP. The protein operates within isoprenoid biosynthesis; isopentenyl diphosphate biosynthesis via DXP pathway; isopentenyl diphosphate from 1-deoxy-D-xylulose 5-phosphate: step 4/6. In terms of biological role, involved in the biosynthesis of isopentenyl diphosphate (IPP) and dimethylallyl diphosphate (DMAPP), two major building blocks of isoprenoid compounds. Catalyzes the conversion of 4-diphosphocytidyl-2-C-methyl-D-erythritol 2-phosphate (CDP-ME2P) to 2-C-methyl-D-erythritol 2,4-cyclodiphosphate (ME-CPP) with a corresponding release of cytidine 5-monophosphate (CMP). The polypeptide is 2-C-methyl-D-erythritol 2,4-cyclodiphosphate synthase (Shewanella halifaxensis (strain HAW-EB4)).